A 99-amino-acid chain; its full sequence is Nucleoid-associated protein SSU98_0195 (99 aa).

It belongs to the YbaB/EbfC family. In terms of assembly, homodimer.

It localises to the cytoplasm. It is found in the nucleoid. Binds to DNA and alters its conformation. May be involved in regulation of gene expression, nucleoid organization and DNA protection. This chain is Nucleoid-associated protein SSU98_0195, found in Streptococcus suis (strain 98HAH33).